The following is a 625-amino-acid chain: Probable thymidylate synthase (625 aa).

The interval 224–323 is disordered; the sequence is AVKNIDGQDD…PEPPVPFTSS (100 aa). The segment covering 243–257 has biased composition (acidic residues); it reads EEYDDDDDDDVDDNE. Composition is skewed to polar residues over residues 258–269 and 293–312; these read QSNSMIETSANA and SQAP…NVTT. Residues arginine 350 and 477–478 contribute to the dUMP site; that span reads RR. The active-site Nucleophile is cysteine 497. DUMP is bound by residues 524 to 527, asparagine 535, and 565 to 567; these read RSAD and HIY. Aspartate 527 is a (6R)-5,10-methylene-5,6,7,8-tetrahydrofolate binding site.

In the N-terminal section; belongs to the HFCD (homo-oligomeric flavin containing Cys decarboxylase) superfamily. It in the C-terminal section; belongs to the thymidylate synthase family.

It is found in the cytoplasm. The enzyme catalyses dUMP + (6R)-5,10-methylene-5,6,7,8-tetrahydrofolate = 7,8-dihydrofolate + dTMP. It participates in pyrimidine metabolism; dTTP biosynthesis. In terms of biological role, required for both nuclear and mitochondrial DNA synthesis. The sequence is that of Probable thymidylate synthase from Schizosaccharomyces pombe (strain 972 / ATCC 24843) (Fission yeast).